We begin with the raw amino-acid sequence, 440 residues long: Collagen alpha-1(XXVI) chain (440 aa).

An N-terminal signal peptide occupies residues 1–20 (MKLVLLLPWACCCLCGSALA). In terms of domain architecture, EMI spans 52-128 (RRHWCHHTVT…PGFTGSNCEE (77 aa)). Cystine bridges form between C56–C118, C83–C89, and C117–C126. The N-linked (GlcNAc...) asparagine glycan is linked to N70. N-linked (GlcNAc...) asparagine glycosylation is present at N132. Disordered stretches follow at residues 157–362 (EQPS…EGEG) and 390–440 (LASP…GDRK). A Collagen-like 1 domain is found at 199 to 267 (GPAGPPGQMG…PGPAGSPGLL (69 aa)). Composition is skewed to pro residues over residues 200 to 215 (PAGP…PAGP), 231 to 243 (VGPP…PGPR), and 252 to 261 (PGPPGPPGPA). A compositionally biased stretch (polar residues) spans 269–281 (NTPQGVLYSLQTP). The region spanning 302–334 (GIPGPRGPPGPPGPPGPHGPPGPPGAPGSQGLV) is the Collagen-like 2 domain. Over residues 306–327 (PRGPPGPPGPPGPHGPPGPPGA) the composition is skewed to pro residues. Basic and acidic residues predominate over residues 347–356 (SVKEEEDKAS).

Homotrimer or heterotrimer. Post-translationally, hydroxylated on proline residues. N-glycosylated. In terms of tissue distribution, specifically expressed in the testis and ovary in adult tissues.

It is found in the secreted. Its subcellular location is the extracellular space. The protein resides in the extracellular matrix. The polypeptide is Collagen alpha-1(XXVI) chain (Col26a1) (Mus musculus (Mouse)).